We begin with the raw amino-acid sequence, 170 residues long: Fibroblast growth factor 2 (170 aa).

The segment at 1-21 is disordered; the sequence is VGGRGRGRGTAAAARREPGGA. An omega-N-methylarginine; alternate mark is found at arginine 4, arginine 6, and arginine 8. Residues arginine 4, arginine 6, and arginine 8 each carry the symmetric dimethylarginine; alternate modification. Residues 9–21 show a composition bias toward low complexity; that stretch reads GTAAAARREPGGA. Heparin is bound at residue asparagine 51. Phosphotyrosine; by TEC is present on tyrosine 97. A Glycyl lysine isopeptide (Lys-Gly) (interchain with G-Cter in SUMO1) cross-link involves residue lysine 110. The interval 143 to 159 is heparin-binding; that stretch reads KRTGQYKLGSKTGPGQK.

Belongs to the heparin-binding growth factors family. In terms of assembly, monomer. Homodimer. Interacts with FGFR1, FGFR2, FGFR3 and FGFR4. Affinity between fibroblast growth factors (FGFs) and their receptors is increased by heparan sulfate glycosaminoglycans that function as coreceptors. Interacts with CSPG4, FGFBP1 and TEC. Found in a complex with FGFBP1, FGF1 and FGF2. Interacts with FGFBP3. Interacts with integrin ITGAV:ITGB3; the interaction is required for FGF2 signaling. Interacts with SNORC (via the extracellular domain). Interacts with glypican GPC3. The N-terminus of isoform 2 is blocked. Post-translationally, phosphorylation at Tyr-97 regulates FGF2 unconventional secretion.

It is found in the secreted. Its subcellular location is the nucleus. In terms of biological role, acts as a ligand for FGFR1, FGFR2, FGFR3 and FGFR4. Also acts as an integrin ligand which is required for FGF2 signaling. Binds to integrin ITGAV:ITGB3. Plays an important role in the regulation of cell survival, cell division, cell differentiation and cell migration. Functions as a potent mitogen in vitro. Can induce angiogenesis. Mediates phosphorylation of ERK1/2 and thereby promotes retinal lens fiber differentiation. The protein is Fibroblast growth factor 2 (FGF2) of Cavia porcellus (Guinea pig).